The primary structure comprises 1012 residues: MTNLSDQTQQIVPFIRSLLMPTTGPASIPDDTLEKHTLRSETSTYNLTVGDTGSGLIVFFPGFPGSIVGAHYTMQSNGNYKFDQMLLTAQNLPASYNYCRLVSRSLTVRSSTLPGGVYALNGTINAVTFQGSLSELTDVSYNGLMSATANINDKIGNVLVGEGVTVLSLPTSYDLGYVRLGDPIPAIGLDPKMVATCDSSDRPRVYTITAADDYQFSSQYQPGGVTITLFSANIDAITNLSVGGELVFQTSVQGLVLNATIYLVGFDGTTVTTRAVAAGNGLTAGTDNLMPFNLVIPTSEITQPVTSIKLEIVTSKSGGQAGDQMSWLASGNLAVTIHGGNYPGALRPVTLVAYERVATGSVVTVAGVSNFELIPNPELAKNLVTEYGRFDPGAMNYTKLILSERDRLGIKTVWPTREYTDFREYFMEVADLNSPLKIAGAFGFKDIIRAIRRIAVPVVSTLFPPAAPLAHAIGEGVDYLLGDEAGAASGTARAASGKARAASGRIRQLTLAADKGYEVVANLFQVPQNPVVDGILASPGVLRGAHNLDCVLREGATLFPVVITTVEDAMTPKALNSKMFAVIEGVREDLQPPSQRGSFIRTLSGHRVYGYAPDGVLPLETGRDYTVVPIDDVWDDSIMLSKDPIPPIVGNSGNLAIAYMDVFRPKVPIHVAMTGALNAYGEVEKVSFRSTKLATAHRLGLKLAGPGAFDINTGPNWATFIKRFPHNPRDWDRLPYLNLPYLPPSAGRQYHLAMAASEFKETPELESAVRAMEAAADVDPLFQSALSVFMWLEENGIVTDMANFALSDPNAHRMRNFLANAPQAGSKSQRAKYGTAGYGVEARGPTPEEAQREKDTRISKKMEAMGIYFATPEWVALNGHRGPSPGQLKYWQNTREIPDPNEDYLDYVHAEKSRLASEEQILRAATSIYGAPGQAEPPQAFIDEVAKVYEINHGRGPNQEQMKDLLLTAMEMKHRNPRRAPPKPKPKPNAPSQRPPGRLGRWIRTVSDEDLE.

Position 30 (Asp-30) interacts with a divalent metal cation. Residues 513 to 755 (ADKGYEVVAN…AGRQYHLAMA (243 aa)) form the Peptidase S50 domain. The active-site Nucleophile is the Ser-652. Lys-692 is a catalytic residue. A disordered region spans residues 970–1012 (MEMKHRNPRRAPPKPKPKPNAPSQRPPGRLGRWIRTVSDEDLE). Over residues 975-986 (RNPRRAPPKPKP) the composition is skewed to basic residues. The interaction with VP1 protein stretch occupies residues 1003–1012 (IRTVSDEDLE).

In terms of assembly, homotrimer. A central divalent metal stabilizes the VP2 trimer. Interacts with host ITGA4/ITGB1. As to quaternary structure, homodimer. Interacts (via C-terminus) with VP1 in the cytoplasm. Interacts with VP2. In terms of processing, specific enzymatic cleavages yield mature proteins. The capsid assembly seems to be regulated by polyprotein processing. The protease VP4 cleaves itself off the polyprotein, thus releasing pre-VP2 and VP3 within the infected cell. During capsid assembly, the C-terminus of pre-VP2 is further processed by VP4, giving rise to VP2, the external capsid protein and three small peptides that all stay closely associated with the capsid.

The protein resides in the virion. Its subcellular location is the host cytoplasm. Its function is as follows. Capsid protein VP2 self assembles to form an icosahedral capsid with a T=13 symmetry, about 70 nm in diameter, and consisting of 260 VP2 trimers. The capsid encapsulates the genomic dsRNA. VP2 is also involved in attachment and entry into the host cell by interacting with host ITGA4/ITGB1. The precursor of VP2 plays an important role in capsid assembly. First, pre-VP2 and VP2 oligomers assemble to form a procapsid. Then, the pre-VP2 intermediates may be processed into VP2 proteins by proteolytic cleavage mediated by VP4 to obtain the mature virion. The final capsid is composed of pentamers and hexamers but VP2 has a natural tendency to assemble into all-pentameric structures. Therefore pre-VP2 may be required to allow formation of the hexameric structures. In terms of biological role, protease VP4 is a serine protease that cleaves the polyprotein into its final products. Pre-VP2 is first partially cleaved, and may be completely processed by VP4 upon capsid maturation. Functionally, capsid protein VP3 plays a key role in virion assembly by providing a scaffold for the capsid made of VP2. May self-assemble to form a T=4-like icosahedral inner-capsid composed of at least 180 trimers. Plays a role in genomic RNA packaging by recruiting VP1 into the capsid and interacting with the dsRNA genome segments to form a ribonucleoprotein complex. Additionally, the interaction of the VP3 C-terminal tail with VP1 removes the inherent structural blockade of the polymerase active site. Thus, VP3 can also function as a transcriptional activator. Its function is as follows. Structural peptide 1 is a small peptide derived from pre-VP2 C-terminus. It destabilizes and perforates cell membranes, suggesting a role during entry. Structural peptide 2 is a small peptide derived from pVP2 C-terminus. It is not essential for the virus viability, but viral growth is affected when missing. In terms of biological role, structural peptide 3 is a small peptide derived from pVP2 C-terminus. It is not essential for the virus viability, but viral growth is affected when missing. Functionally, structural peptide 4 is a small peptide derived from pVP2 C-terminus. It is essential for the virus viability. This is Structural polyprotein from Avian infectious bursal disease virus (strain Australian 002-73) (IBDV).